Reading from the N-terminus, the 217-residue chain is Octanoyltransferase (217 aa).

Residues 32–207 (SESHDELWIV…TFSQLLGYQH (176 aa)) enclose the BPL/LPL catalytic domain. Substrate contacts are provided by residues 71–78 (RGGQVTYH), 138–140 (SLG), and 151–153 (GLA). C169 acts as the Acyl-thioester intermediate in catalysis.

It belongs to the LipB family.

It localises to the cytoplasm. It carries out the reaction octanoyl-[ACP] + L-lysyl-[protein] = N(6)-octanoyl-L-lysyl-[protein] + holo-[ACP] + H(+). It participates in protein modification; protein lipoylation via endogenous pathway; protein N(6)-(lipoyl)lysine from octanoyl-[acyl-carrier-protein]: step 1/2. Its function is as follows. Catalyzes the transfer of endogenously produced octanoic acid from octanoyl-acyl-carrier-protein onto the lipoyl domains of lipoate-dependent enzymes. Lipoyl-ACP can also act as a substrate although octanoyl-ACP is likely to be the physiological substrate. In Shewanella baltica (strain OS155 / ATCC BAA-1091), this protein is Octanoyltransferase.